The sequence spans 318 residues: Ubiquitin-conjugating enzyme E2 J1 (318 aa).

Over 1–282 (METRYNLKSP…QGHQPRDNHT (282 aa)) the chain is Cytoplasmic. One can recognise a UBC core domain in the interval 10–160 (PAVKRLMKEA…GCGSAMKDVL (151 aa)). The active-site Glycyl thioester intermediate is C91. S184 bears the Phosphoserine; by MAPKAPK2 mark. Polar residues predominate over residues 229-248 (LQNSSAASFHQPTQPVAKNT). Residues 229–283 (LQNSSAASFHQPTQPVAKNTSMSPRQRRAQQQSQRRLSTSPDVIQGHQPRDNHTD) are disordered. Residues 249 to 268 (SMSPRQRRAQQQSQRRLSTS) are compositionally biased toward low complexity. Phosphoserine is present on residues S266 and S268. The chain crosses the membrane as a helical; Anchor for type IV membrane protein span at residues 283–303 (DHGGSAVLIVILTLALAALIF). Residues 304–318 (RRIYLANEYIFDFEL) lie on the Lumenal side of the membrane.

Belongs to the ubiquitin-conjugating enzyme family. As to quaternary structure, component of the HRD1 complex, which comprises at least SYNV1/HRD1, DERL1/2, FAM8A1, HERPUD1/HERP, OS9, SEL1L and UBE2J1. Interacts with E3 ligase RNF26. Interacts with E3 ligase RNF133. In terms of processing, phosphorylated at Ser-184 in a cytosolic stress-dependent manner by MAP kinase p38 MAPKAPK2. Phosphorylated UBE2J1 is rapidly ubiquitinated and subsequently degraded by the proteasome. In terms of tissue distribution, expressed in testes.

The protein localises to the endoplasmic reticulum membrane. It carries out the reaction S-ubiquitinyl-[E1 ubiquitin-activating enzyme]-L-cysteine + [E2 ubiquitin-conjugating enzyme]-L-cysteine = [E1 ubiquitin-activating enzyme]-L-cysteine + S-ubiquitinyl-[E2 ubiquitin-conjugating enzyme]-L-cysteine.. Its pathway is protein modification; protein ubiquitination. Catalyzes the covalent attachment of ubiquitin to other proteins. Functions in the selective degradation of misfolded membrane proteins from the endoplasmic reticulum (ERAD) and is essential for cells to recover from ER stress. Plays a role in MAPKAPK2-dependent translational control of TNF-alpha synthesis. Also acts as a platform for perinuclear positioning of the endosomal system by mediating ubiquitination of SQSTM1 through interaction with the E3 ubiquitin-protein ligase RNF26. Plays a role in male fecundity through the interaction with the E3 ubiquitin-protein ligase RNF133. Functionally, (Microbial infection) Promotes Dengue virus RNA replication by negatively regulating IFN-beta signaling and mediating 'Lys-48'-linked ubiquitination on IRF3. The chain is Ubiquitin-conjugating enzyme E2 J1 from Homo sapiens (Human).